Consider the following 706-residue polypeptide: Polyribonucleotide nucleotidyltransferase (706 aa).

Positions 483 and 489 each coordinate Mg(2+). Residues proline 550 to isoleucine 609 enclose the KH domain. Residues glycine 619–lysine 687 enclose the S1 motif domain.

This sequence belongs to the polyribonucleotide nucleotidyltransferase family. The cofactor is Mg(2+).

The protein localises to the cytoplasm. The catalysed reaction is RNA(n+1) + phosphate = RNA(n) + a ribonucleoside 5'-diphosphate. In terms of biological role, involved in mRNA degradation. Catalyzes the phosphorolysis of single-stranded polyribonucleotides processively in the 3'- to 5'-direction. The chain is Polyribonucleotide nucleotidyltransferase from Pelobacter propionicus (strain DSM 2379 / NBRC 103807 / OttBd1).